Here is a 434-residue protein sequence, read N- to C-terminus: Glycoprotein U20 (434 aa).

An N-terminal signal peptide occupies residues 1 to 15; that stretch reads MITVFVACLFQCVSS. Residues 322-342 form a helical membrane-spanning segment; that stretch reads LLWIFIVIPIAAGCMFLYILT.

Its subcellular location is the host endoplasmic reticulum membrane. The protein localises to the host lysosome membrane. In terms of biological role, plays a role in the down-regulation of the host stress-induced NKG2D ligand UBPL1, which enables immune cells expressing the NKG2D receptor to recognize and annihilate infected cells prior to viral spread. This is Glycoprotein U20 (U20) from Human herpesvirus 6B (strain Z29) (HHV-6 variant B).